Consider the following 212-residue polypeptide: MSVRGTSFASFSSVAAELIELSRFCHERGWTPATSGNFSARLGDGSLAITASGRPKGALGVSDIVVVNADGRLTGPSPARPSAETALHCQLYRHSSEIGAVAHTHSRAATVLSRRCAQEGYVTLSGYEVAKALSGMTTHTATVLLPVFVNTQDIRRLAEDVDAFMSAHPPVYGYLIAGHGLYTWGSDIASTIRHIEAIEFMLDCALLEGGLS.

2 residues coordinate Zn(2+): His-103 and His-105.

It belongs to the aldolase class II family. MtnB subfamily. The cofactor is Zn(2+).

It catalyses the reaction 5-(methylsulfanyl)-D-ribulose 1-phosphate = 5-methylsulfanyl-2,3-dioxopentyl phosphate + H2O. It participates in amino-acid biosynthesis; L-methionine biosynthesis via salvage pathway; L-methionine from S-methyl-5-thio-alpha-D-ribose 1-phosphate: step 2/6. In terms of biological role, catalyzes the dehydration of methylthioribulose-1-phosphate (MTRu-1-P) into 2,3-diketo-5-methylthiopentyl-1-phosphate (DK-MTP-1-P). The protein is Methylthioribulose-1-phosphate dehydratase of Sorangium cellulosum (strain So ce56) (Polyangium cellulosum (strain So ce56)).